The sequence spans 1252 residues: Calmodulin-regulated spectrin-associated protein 3 (1252 aa).

Disordered stretches follow at residues 183–205 (KTEQEAAQRASPAAPLDGASPAQ), 331–385 (HAVS…SMSH), 429–457 (SVSSDSLGPPRPVSTSSRNSAQPAPESGD), 479–604 (GAAD…MSEL), 638–697 (FLQV…LGDY), 712–935 (QRDM…EAAR), 962–981 (TTRAMAPAEEEVGPRRGDFT), 996–1030 (DLDKVLRPRASGTGGPGRGGRRATRPRSGCCDDSA), and 1063–1114 (PNNL…TGPR). Thr184 carries the post-translational modification Phosphothreonine. Ser193 carries the phosphoserine modification. The region spanning 203–312 (PAQPSIRYRK…LVVLLAEMYM (110 aa)) is the Calponin-homology (CH) domain. Phosphoserine occurs at positions 334, 347, 351, 368, 373, and 382. Residues 335–353 (PRNTETVPSQNNSGSSSPV) are compositionally biased toward polar residues. Residues 359 to 373 (PLLSPGGPQSPLRGS) are compositionally biased toward low complexity. Polar residues-rich tracts occupy residues 374–383 (TGSLKSSPSM), 441–450 (VSTSSRNSAQ), and 525–534 (ENPSKSSPCS). Phosphoserine is present on residues Ser548, Ser555, and Ser561. Basic and acidic residues predominate over residues 569 to 580 (AERKKQLVKAEA). Positions 595-629 (EALSSEMSELGARLEEKRRAIEAQKRRIEAIFAKH) form a coiled coil. Phosphoserine is present on Ser683. The stretch at 696–727 (DYNRAVSKLSAALSSLQRDMQRLTDQQQRLLA) forms a coiled coil. A compositionally biased stretch (pro residues) spans 729–739 (PEAPGPAPPPA). A compositionally biased stretch (low complexity) spans 740 to 768 (AWVIPGPATGPKAASPSPARRAPAARRSP). Ser767 carries the phosphoserine modification. At Thr797 the chain carries Phosphothreonine. Ser812 and Ser881 each carry phosphoserine. A compositionally biased stretch (polar residues) spans 812-825 (SPSQVPVQTRSSIL). Residues 887–934 (YKDEDKPEDEMAQKRASLLERQQRRVEEARRRKQWQEAEKEQKREEAA) show a composition bias toward basic and acidic residues. Residues 896–943 (EMAQKRASLLERQQRRVEEARRRKQWQEAEKEQKREEAARLAQEAPGL) adopt a coiled-coil conformation. Ser1077 carries the post-translational modification Phosphoserine. The region spanning 1112–1246 (GPRLYKEPSA…QSKKPTTPKK (135 aa)) is the CKK domain.

Belongs to the CAMSAP1 family. In terms of assembly, interacts with PLEKHA7. Interacts with CAMSAP2. Interacts with KATNA1 and KATNB1; leading to regulate the length of CAMSAP3-decorated microtubule stretches. Interacts with AKAP9; regulating Golgi assembly in epithelial cells. Interacts with MACF1. Interacts with isoform C of CDH23; leading to inhibit CAMSAP3 ability to induce microtubule bundle formation. Interacts with AKNA. Expressed at the apical surface of respiratory epithelia, as well as in the acini of submucosal glands (at protein level). In cochlea, restricted to the organ of Corti and increases during development (at protein level). Highly expressed in both sensory hair cells and supporting cells.

Its subcellular location is the cytoplasm. It localises to the cytoskeleton. The protein resides in the cell junction. It is found in the adherens junction. The protein localises to the cilium axoneme. Its subcellular location is the cilium basal body. Functionally, key microtubule-organizing protein that specifically binds the minus-end of non-centrosomal microtubules and regulates their dynamics and organization. Specifically recognizes growing microtubule minus-ends and autonomously decorates and stabilizes microtubule lattice formed by microtubule minus-end polymerization. Acts on free microtubule minus-ends that are not capped by microtubule-nucleating proteins or other factors and protects microtubule minus-ends from depolymerization. In addition, it also reduces the velocity of microtubule polymerization. Required for the biogenesis and the maintenance of zonula adherens by anchoring the minus-end of microtubules to zonula adherens and by recruiting the kinesin KIFC3 to those junctional sites. Required for orienting the apical-to-basal polarity of microtubules in epithelial cells: acts by tethering non-centrosomal microtubules to the apical cortex, leading to their longitudinal orientation. Plays a key role in early embryos, which lack centrosomes: accumulates at the microtubule bridges that connect pairs of cells and enables the formation of a non-centrosomal microtubule-organizing center that directs intracellular transport in the early embryo. Couples non-centrosomal microtubules with actin: interaction with MACF1 at the minus ends of non-centrosomal microtubules, tethers the microtubules to actin filaments, regulating focal adhesion size and cell migration. Plays a key role in the generation of non-centrosomal microtubules by accumulating in the pericentrosomal region and cooperating with KATNA1 to release non-centrosomal microtubules from the centrosome. Through the microtubule cytoskeleton, also regulates the organization of cellular organelles including the Golgi and the early endosomes. Through interaction with AKAP9, involved in translocation of Golgi vesicles in epithelial cells, where microtubules are mainly non-centrosomal. Plays an important role in motile cilia function by facilitatating proper orientation of basal bodies and formation of central microtubule pairs in motile cilia. The polypeptide is Calmodulin-regulated spectrin-associated protein 3 (Mus musculus (Mouse)).